The primary structure comprises 393 residues: Xyloside xylosyltransferase 1 (393 aa).

Over 1 to 23 (MGLLRGGLPCARAMARLGAVRSH) the chain is Cytoplasmic. A helical; Signal-anchor for type II membrane protein membrane pass occupies residues 24-44 (YCALLLAAALAVCAFYYLGSG). The Lumenal segment spans residues 45–393 (RETFSSATKR…GNCNTPIPED (349 aa)). 104–106 (MFT) lines the UDP-alpha-D-xylose pocket. Asp-226 is a Mn(2+) binding site. Leu-227 lines the UDP-alpha-D-xylose pocket. Asp-228 provides a ligand contact to Mn(2+). The interaction with target proteins stretch occupies residues 263 to 266 (HTFW). Residues Ser-290, Leu-328, and Gln-331 each contribute to the UDP-alpha-D-xylose site. The a glycoprotein site is built by Gln-331 and Trp-360. 2 disulfides stabilise this stretch: Cys-350-Cys-375 and Cys-357-Cys-386. His-383 is a Mn(2+) binding site. Asn-385 provides a ligand contact to a glycoprotein.

This sequence belongs to the glycosyltransferase 8 family. Homodimer. Dimer formation may be essential for the retention in endoplasmic reticulum. Requires Mg(2+) as cofactor. It depends on Mn(2+) as a cofactor.

The protein localises to the endoplasmic reticulum membrane. It catalyses the reaction 3-O-[alpha-D-xylosyl-(1-&gt;3)-beta-D-glucosyl]-L-seryl-[EGF-like domain protein] + UDP-alpha-D-xylose = 3-O-[alpha-D-xylosyl-(1-&gt;3)-alpha-D-xylosyl-(1-&gt;3)-beta-D-glucosyl]-L-seryl-[EGF-like domain protein] + UDP + H(+). Functionally, alpha-1,3-xylosyltransferase, which elongates the O-linked xylose-glucose disaccharide attached to EGF-like repeats in the extracellular domain of target proteins by catalyzing the addition of the second xylose. Known targets include Notch proteins and coagulation factors, such as F9. This chain is Xyloside xylosyltransferase 1 (XXYLT1), found in Homo sapiens (Human).